Here is a 142-residue protein sequence, read N- to C-terminus: Large ribosomal subunit protein uL13 (142 aa).

This sequence belongs to the universal ribosomal protein uL13 family. In terms of assembly, part of the 50S ribosomal subunit.

In terms of biological role, this protein is one of the early assembly proteins of the 50S ribosomal subunit, although it is not seen to bind rRNA by itself. It is important during the early stages of 50S assembly. The sequence is that of Large ribosomal subunit protein uL13 from Psychrobacter arcticus (strain DSM 17307 / VKM B-2377 / 273-4).